A 476-amino-acid polypeptide reads, in one-letter code: MVAMARWPWRVLLPLLLLHSSPVFFVFAQEGQDNDPSTLFKRALEMMNLRKYDGSLGLLNAVLEVEPNHSEAYRQRASVLRHKCRYKEAEGDYSKYLELKPGSSSVEKELSQLLQAQNALESAYGQFESHDFSKVLDYINKIVLVFSPDCLKAKLLKAKALLALKDYSTVISETGFILKEDEDNLDALLLRGRAYYYLADHDVASRHYQKGLRLDPEHSELKKAYFGLKNLVKKTKSAEDNAAKGKLRVSAEDYKASLAMDPDHTSYNVHLYLGLCKVLVKLGRGKEAISSCTEALNIDGELVDALTQRGEAKLLTEDWEGAVQDLKEAAQKSPQDMGIREALMRAEKQLKLSKRKDWYKILGISKTASAAEIKRAYKKLALQWHPDKNVDKREEAENMFREIAAAYEVLGDEDKRVRYDRGEDLDEMNMGGGGGGGFNPFGGGGQQYTFHYDGGFHGGGGFPGGGFPGGFQFNFG.

A signal peptide spans 1–28 (MVAMARWPWRVLLPLLLLHSSPVFFVFA). TPR repeat units follow at residues 36–69 (PSTL…EPNH), 70–103 (SEAY…KPGS), 116–150 (AQNA…SPDC), 152–184 (KAKL…DEDN), 185–218 (LDAL…DPEH), 231–264 (LVKK…DPDH), 269–302 (VHLY…DGEL), and 304–336 (DALT…SPQD). A J domain is found at 357–423 (DWYKILGISK…DKRVRYDRGE (67 aa)).

Interacts with BIP1.

The protein localises to the endoplasmic reticulum lumen. Functionally, may play a role in protein folding in the endoplasmic reticulum. This is DnaJ protein P58IPK homolog A from Oryza sativa subsp. japonica (Rice).